We begin with the raw amino-acid sequence, 430 residues long: tRNA(Ile)-lysidine synthase (430 aa).

Residue 24–29 (SGGLDS) participates in ATP binding.

Belongs to the tRNA(Ile)-lysidine synthase family.

It localises to the cytoplasm. It catalyses the reaction cytidine(34) in tRNA(Ile2) + L-lysine + ATP = lysidine(34) in tRNA(Ile2) + AMP + diphosphate + H(+). Its function is as follows. Ligates lysine onto the cytidine present at position 34 of the AUA codon-specific tRNA(Ile) that contains the anticodon CAU, in an ATP-dependent manner. Cytidine is converted to lysidine, thus changing the amino acid specificity of the tRNA from methionine to isoleucine. The polypeptide is tRNA(Ile)-lysidine synthase (Haemophilus influenzae (strain PittEE)).